Here is a 679-residue protein sequence, read N- to C-terminus: Glycine--tRNA ligase beta subunit (679 aa).

It belongs to the class-II aminoacyl-tRNA synthetase family. As to quaternary structure, tetramer of two alpha and two beta subunits.

The protein localises to the cytoplasm. It catalyses the reaction tRNA(Gly) + glycine + ATP = glycyl-tRNA(Gly) + AMP + diphosphate. This is Glycine--tRNA ligase beta subunit from Streptococcus gordonii (strain Challis / ATCC 35105 / BCRC 15272 / CH1 / DL1 / V288).